A 391-amino-acid chain; its full sequence is Glycosyltransferase afumC (391 aa).

This sequence belongs to the afumC glycosyltransferase family.

Its pathway is secondary metabolite biosynthesis. Activity is significantly decreased by addition of divalent cations such as Mg(2+), Mn(2+), Zn(2+), Ca(2+), Co(2+), Cu(2+), and Ni(2+); while Fe(2+) has little effect. Glycosyltransferase; part of the gene cluster that mediates the biosynthesis fumihopaside A, a hopane-type glucoside that enhances the thermotolerance and UV resistance of N.fumigata. The first step of fumihopaside A biosynthesis is performed by the squalene hopane cyclase afumA that catalyzes the cyclization of 3S-oxidosqualene into the hopene 21-beta-H-hopane-3-beta,22-diol. The cytochrome P450 monooxygenase afumB is responsible for both hydroxylation at C-24 and oxidations at C-30 of the afumA product. The glycosyltransferase afumC then catalyzes the glycosylation at C-24, using UDP-D-glucose as a donor, to produce fumihopaside A. AfumC is also able to accept UDP-D-galactose and UDP-D-glucuronic acid as donors to yield minor derivatives. Fumihopaside B, another minor derivative produced, is different from fumihopaside A due to the presence of a double bond between C-22 and C-29. The polypeptide is Glycosyltransferase afumC (Aspergillus fumigatus (strain CBS 144.89 / FGSC A1163 / CEA10) (Neosartorya fumigata)).